The primary structure comprises 749 residues: Small G protein signaling modulator 3 (749 aa).

Residues 114 to 305 (GIPHGMRPQL…RIWDLFFYEG (192 aa)) form the Rab-GAP TBC domain. S406 carries the post-translational modification Phosphoserine. Residues 415–439 (EDDLEALKAKNIKQTELVADLREAI) are a coiled coil. The SH3 domain maps to 480–539 (SHRRRAKALLDFERHDDDELGFRKNDIITIVSQKDEHCWVGELNGLRGWFPAKFVEVLDE). Residues 555-718 (GVTDLVRGTL…FAFSLSQDWE (164 aa)) enclose the RUN domain.

The protein belongs to the small G protein signaling modulator family. In terms of assembly, interacts with GJA1. Interaction with GJA1 induces its degradation. Interacts via its RUN domain with the C-terminal region of NF2. Interacts with RAB3A, RAB4A, RAB5A, RAB8A, RAB11A, RAP1A, RAP1B, RAP2A, RAP2B and PDCD6IP. No interaction with RAB27A. In terms of tissue distribution, widely expressed.

It is found in the cytoplasm. May play a cooperative role in NF2-mediated growth suppression of cells. This chain is Small G protein signaling modulator 3, found in Homo sapiens (Human).